A 169-amino-acid polypeptide reads, in one-letter code: Protein pid-1 (169 aa).

The span at 137–151 (SGSPRITPQKHTPVS) shows a compositional bias: polar residues. The segment at 137-169 (SGSPRITPQKHTPVSANHKPARSIFDDIPSNIA) is disordered.

As to quaternary structure, component of the pid-1 variant of the PETISCO complex (also called the pid-3, erh-2, tofu-6, and ife-3 small RNA complex) containing at least pid-1, tofu-6, ife-3, pid-3, and erh-2, which is required for the biogenesis of a class of 21 nucleotide PIWI-interacting RNAs (piRNAs) that possess a uracil residue at the 5'-end (also called 21U-RNAs). Within the complex interacts with pid-3; the interaction is direct. Within the complex interacts with erh-2. Within the complex interacts with tofu-6. As to expression, expressed predominantly in the germline (at protein level).

The protein resides in the cytoplasm. It localises to the nucleus. The protein localises to the perinuclear region. Functionally, component of the pid-1 variant of the PETISCO complex which is required for the biogenesis of a class of 21 nucleotide PIWI-interacting RNAs (piRNAs) that possess a uracil residue at the 5'-end (also called 21U-RNAs). Within the complex acts as an adapter which binds to the complex via erh-2. Involved in the biogenesis of 21U-RNAs which guide the piwi protein prg-1 to its DNA targets for silencing. Plays a role in small RNA-directed transgenerational epigenetic inheritance. In Caenorhabditis elegans, this protein is Protein pid-1.